Consider the following 391-residue polypeptide: MDPSPLLALLLLLGAARALSTCQRLDLEAAKKKRIEAVRGQILSKLRLTAPPPASETPPRPLPDDVRALYNSTQELLKQRARLRPPPDGPDEYWAKELRRIPMETTWDGPMEHWQPQSHSIFFVFNVSRVRAEVGGRALLHRAELRMLRQKAAADSAGTEQRLELYQGYGNASWRYLHGRSVRATADDEWLSFDVTDAVHQWLSGSELLGVFKLSVHCPCEMGPGHADEMRISIEGFEQQRGDMQSIAKKHRRVPYVLAMALPAERANELHSARRRRDLDTDYCFGPGTDEKNCCVRPLYIDFRKDLQWKWIHEPKGYMANFCMGPCPYIWSADTQYTKVLALYNQHNPGASAAPCCVPQTLDPLPIIYYVGRNVRVEQLSNMVVRACKCS.

The first 18 residues, 1–18, serve as a signal peptide directing secretion; it reads MDPSPLLALLLLLGAARA. The tract at residues 19-63 is straightjacket domain; sequence LSTCQRLDLEAAKKKRIEAVRGQILSKLRLTAPPPASETPPRPLP. The segment at 64–270 is arm domain; the sequence is DDVRALYNST…ALPAERANEL (207 aa). N-linked (GlcNAc...) asparagine glycosylation is found at Asn-71, Asn-126, and Asn-171. Residues 221 to 249 are bowtie tail; that stretch reads EMGPGHADEMRISIEGFEQQRGDMQSIAK. A Cell attachment site motif is present at residues 241–243; it reads RGD. 4 disulfides stabilise this stretch: Cys-284/Cys-295, Cys-294/Cys-357, Cys-323/Cys-388, and Cys-327/Cys-390.

The protein belongs to the TGF-beta family. In terms of assembly, latency-associated peptide: Homodimer; disulfide-linked. Latency-associated peptide: Interacts with Transforming growth factor beta-1 (TGF-beta-1) chain; interaction is non-covalent and maintains (TGF-beta-1) in a latent state; each Latency-associated peptide (LAP) monomer interacts with TGF-beta-1 in the other monomer. Transforming growth factor beta-1: Homodimer; disulfide-linked. Transforming growth factor beta-1: Interacts with TGF-beta receptors (TGFBR1 and TGFBR2), leading to signal transduction. Post-translationally, transforming growth factor beta-1 proprotein: The precursor proprotein is cleaved in the Golgi apparatus to form Transforming growth factor beta-1 (TGF-beta-1) and Latency-associated peptide (LAP) chains, which remain non-covalently linked, rendering TGF-beta-1 inactive.

It is found in the secreted. The protein localises to the extracellular space. Its subcellular location is the extracellular matrix. Functionally, transforming growth factor beta-1 proprotein: Precursor of the Latency-associated peptide (LAP) and Transforming growth factor beta-1 (TGF-beta-1) chains, which constitute the regulatory and active subunit of TGF-beta-1, respectively. Its function is as follows. Required to maintain the Transforming growth factor beta-1 (TGF-beta-1) chain in a latent state during storage in extracellular matrix. Associates non-covalently with TGF-beta-1 and regulates its activation via interaction with 'milieu molecules', such as LTBP1, LRRC32/GARP and LRRC33/NRROS, that control activation of TGF-beta-1. Interaction with integrins (ITGAV:ITGB6 or ITGAV:ITGB8) results in distortion of the Latency-associated peptide chain and subsequent release of the active TGF-beta-1. Transforming growth factor beta-1: Multifunctional protein that regulates the growth and differentiation of various cell types and is involved in various processes, such as normal development, immune function, microglia function and responses to neurodegeneration. Activation into mature form follows different steps: following cleavage of the proprotein in the Golgi apparatus, Latency-associated peptide (LAP) and Transforming growth factor beta-1 (TGF-beta-1) chains remain non-covalently linked rendering TGF-beta-1 inactive during storage in extracellular matrix. At the same time, LAP chain interacts with 'milieu molecules', such as LTBP1, LRRC32/GARP and LRRC33/NRROS that control activation of TGF-beta-1 and maintain it in a latent state during storage in extracellular milieus. TGF-beta-1 is released from LAP by integrins (ITGAV:ITGB6 or ITGAV:ITGB8): integrin-binding to LAP stabilizes an alternative conformation of the LAP bowtie tail and results in distortion of the LAP chain and subsequent release of the active TGF-beta-1. Once activated following release of LAP, TGF-beta-1 acts by binding to TGF-beta receptors (TGFBR1 and TGFBR2), which transduce signal. While expressed by many cells types, TGF-beta-1 only has a very localized range of action within cell environment thanks to fine regulation of its activation by Latency-associated peptide chain (LAP) and 'milieu molecules'. Plays an important role in bone remodeling: acts as a potent stimulator of osteoblastic bone formation. Can promote either T-helper 17 cells (Th17) or regulatory T-cells (Treg) lineage differentiation in a concentration-dependent manner. Can induce epithelial-to-mesenchymal transition (EMT) and cell migration in various cell types. The chain is Transforming growth factor beta-1 proprotein (TGFB1) from Gallus gallus (Chicken).